A 556-amino-acid chain; its full sequence is Chaperone protein HscC (556 aa).

It belongs to the heat shock protein 70 family.

Its function is as follows. Probable chaperone. Has ATPase activity. Not stimulated by DnaJ. This chain is Chaperone protein HscC (hscC), found in Escherichia coli (strain K12).